The sequence spans 1375 residues: Capping protein, Arp2/3 and myosin-I linker protein 3 (1375 aa).

Positions 124-151 (IRRGNADTPEGPRDTSPNSETSTSTTHS) are disordered. A compositionally biased stretch (low complexity) spans 138–151 (TSPNSETSTSTTHS). LRR repeat units lie at residues 244-264 (SLEE…QKLA), 274-295 (VLHA…SLSQ), 303-323 (GLTK…QALG), 335-357 (SLRY…NALY), 365-386 (ALVH…GALL), 392-413 (HLTY…EAPP), 424-444 (TLSH…RALL), 455-475 (DLHL…ALQE), 482-501 (CIGS…LTLV), and 509-530 (SLKH…EEIL). Disordered stretches follow at residues 864 to 901 (RTLS…GTNI) and 969 to 1375 (KLRH…PGTD). Residues 981-997 (PRTTPPGPGRPSVPVPG) show a composition bias toward pro residues. Residues 1007-1022 (RLDEGLEDFFSRRVMD) are compositionally biased toward basic and acidic residues. Positions 1047 to 1062 (QKKRRRGLFHFRRPRS) are enriched in basic residues. Positions 1078 to 1097 (LPPPPPPPPTQESPPSPDPP) are enriched in pro residues. The span at 1098-1108 (SLGNNSSPCWS) shows a compositional bias: low complexity. A compositionally biased stretch (basic and acidic residues) spans 1219–1229 (RRAEATWHIAE). A compositionally biased stretch (polar residues) spans 1233–1244 (ANHSCQSPSPAS). The segment covering 1272–1281 (PIGPRPPKPV) has biased composition (pro residues). Residues 1348-1360 (QSCDKLEPDRRQP) show a composition bias toward basic and acidic residues.

Belongs to the CARMIL family.

The protein resides in the cytoplasm. It is found in the cell membrane. This is Capping protein, Arp2/3 and myosin-I linker protein 3 (Carmil3) from Mus musculus (Mouse).